Here is a 445-residue protein sequence, read N- to C-terminus: Chromosomal replication initiator protein DnaA (445 aa).

Residues 1-72 (MSGIDTIWEK…QEAFIEEIGE (72 aa)) are domain I, interacts with DnaA modulators. A domain II region spans residues 72–107 (EKLNIKVISSEDELMNNEKEAPVRKTQQTSQELLPN). The tract at residues 108-324 (QLNTDNTFDT…GALTRVSAYS (217 aa)) is domain III, AAA+ region. ATP-binding residues include Gly152, Gly154, Lys155, and Thr156. Residues 325-445 (KLVNRELNSD…LKNIEKDITS (121 aa)) form a domain IV, binds dsDNA region.

Belongs to the DnaA family. In terms of assembly, oligomerizes as a right-handed, spiral filament on DNA at oriC.

Its subcellular location is the cytoplasm. In terms of biological role, plays an essential role in the initiation and regulation of chromosomal replication. ATP-DnaA binds to the origin of replication (oriC) to initiate formation of the DNA replication initiation complex once per cell cycle. Binds the DnaA box (a 9 base pair repeat at the origin) and separates the double-stranded (ds)DNA. Forms a right-handed helical filament on oriC DNA; dsDNA binds to the exterior of the filament while single-stranded (ss)DNA is stabiized in the filament's interior. The ATP-DnaA-oriC complex binds and stabilizes one strand of the AT-rich DNA unwinding element (DUE), permitting loading of DNA polymerase. After initiation quickly degrades to an ADP-DnaA complex that is not apt for DNA replication. Binds acidic phospholipids. This is Chromosomal replication initiator protein DnaA from Macrococcus caseolyticus (strain JCSC5402) (Macrococcoides caseolyticum).